The sequence spans 272 residues: uncharacterized protein (272 aa).

Active-site residues include Asp71 and Glu163.

Belongs to the glycosyl hydrolase 25 family.

This is an uncharacterized protein from Escherichia coli (strain K12).